We begin with the raw amino-acid sequence, 419 residues long: MLTTRPRGTNDILPGEVEKWQFLEQLTRQVCREYGYGEIRTPIFEHTELFARGVGETTDIVEKEMYTFTDRGDRSITLRPEGTASTVRAYVENKLHALPQPVKLYYTGPMFRYDRPQAGRYRQFHQFGVEVFGSNDPAIDAEVIAMAMDIYHRIGLQNLKLHINSVGCPECRPVLRQRLQEYFKPHLSNLCSNCQGRYERNPLRILDCKSEKCQEIGQSAPTTLDVLCPECNSHFESVKTYLDAVGVSYIIDNRLVRGLDYYTRTAFEIMTQDIGAQSSIGGGGRYNGLIEECGGPATPGIGFALGLERILLTAERQGITFPITRGPQVYIATVGSGIERQAFALLQDLRRQGIAAEKDYLGRSLKAQMKFAGKLDTRFVVILGEEEFDRGVAVVRDMQAGEQQEVSLRELVLFIKART.

The protein belongs to the class-II aminoacyl-tRNA synthetase family. Homodimer.

It localises to the cytoplasm. The catalysed reaction is tRNA(His) + L-histidine + ATP = L-histidyl-tRNA(His) + AMP + diphosphate + H(+). This is Histidine--tRNA ligase from Desulforamulus reducens (strain ATCC BAA-1160 / DSM 100696 / MI-1) (Desulfotomaculum reducens).